The chain runs to 244 residues: MLALVCSCLLLAALPADTWSGPAAVELGSDTVEQIRDTHAKVTEIWQALTQQRAAQGEPAGALHAVCRVQPSATLDAAQPRVSGLVVFRQLGPGAQLEAFFDLEGFPVEANLSSRAIHVHQFGDLSQGCDSTGAHYNPLAVQHPQHPGDFGNFAVRDGRLWKYRSGLAASLAGPHSIVGRAVVVHAGEDDLGRGGNAASVENGNAGPRLACCVVGASGPAPWARQAQEHAERKKRRRESECKAA.

Residues 1-18 (MLALVCSCLLLAALPADT) form the signal peptide. Intrachain disulfides connect Cys67–Cys212 and Cys129–Cys211. N-linked (GlcNAc...) asparagine glycosylation is present at Asn111. Cu cation-binding residues include His118, His120, and His135. Residues His135, His143, His146, and Asp149 each coordinate Zn(2+). His185 contributes to the Cu cation binding site. The segment at 221–244 (PWARQAQEHAERKKRRRESECKAA) is disordered. Residues 226-244 (AQEHAERKKRRRESECKAA) are compositionally biased toward basic and acidic residues.

This sequence belongs to the Cu-Zn superoxide dismutase family. As to quaternary structure, homotetramer. Directly interacts with ATP7A; this interaction is copper-dependent and is required for SOD3 activity. Requires Cu cation as cofactor. It depends on Zn(2+) as a cofactor.

The protein resides in the secreted. It is found in the extracellular space. The protein localises to the golgi apparatus. Its subcellular location is the trans-Golgi network. The enzyme catalyses 2 superoxide + 2 H(+) = H2O2 + O2. Its function is as follows. Protect the extracellular space from toxic effect of reactive oxygen intermediates by converting superoxide radicals into hydrogen peroxide and oxygen. The chain is Extracellular superoxide dismutase [Cu-Zn] (SOD3) from Oryctolagus cuniculus (Rabbit).